Reading from the N-terminus, the 315-residue chain is Type II restriction enzyme SalI (315 aa).

It catalyses the reaction Endonucleolytic cleavage of DNA to give specific double-stranded fragments with terminal 5'-phosphates.. In terms of biological role, a P subtype restriction enzyme that recognizes the double-stranded sequence 5'-GTCGAC-3' and cleaves after G-1. This chain is Type II restriction enzyme SalI, found in Streptomyces albus G.